We begin with the raw amino-acid sequence, 265 residues long: Mlc titration factor A (265 aa).

4 residues coordinate Zn(2+): His111, His148, His152, and Glu211.

Belongs to the MtfA family. In terms of assembly, interacts with Mlc. The cofactor is Zn(2+).

Its subcellular location is the cytoplasm. In terms of biological role, involved in the modulation of the activity of the glucose-phosphotransferase system (glucose-PTS). Interacts with the transcriptional repressor Mlc, preventing its interaction with DNA and leading to the modulation of expression of genes regulated by Mlc, including ptsG, which encodes the PTS system glucose-specific EIICB component. Functionally, shows zinc-dependent metallopeptidase activity. In Escherichia coli O17:K52:H18 (strain UMN026 / ExPEC), this protein is Mlc titration factor A.